We begin with the raw amino-acid sequence, 197 residues long: OV-16 antigen (197 aa).

The N-terminal stretch at 1–16 (MHCLQVVIAIVLYSFG) is a signal peptide. Residues Asn-56, Asn-61, Asn-119, and Asn-124 are each glycosylated (N-linked (GlcNAc...) asparagine).

It belongs to the phosphatidylethanolamine-binding protein family. Hypodermis, cuticle and uterus.

The sequence is that of OV-16 antigen (OV16) from Onchocerca volvulus.